The sequence spans 841 residues: Envelope glycoprotein H (841 aa).

An N-terminal signal peptide occupies residues 1–17 (MFALVLAVVILPLWTTA). 3 N-linked (GlcNAc...) asparagine; by host glycosylation sites follow: N18, N45, and N217. Residues 18 to 802 (NKSYVTPTPA…ERRQAIRMSG (785 aa)) lie on the Virion surface side of the membrane. An interaction with gL region spans residues 246-309 (DSGRVEVNIG…DPGPSYRVYL (64 aa)). Residues N317, N499, N522, N760, and N783 are each glycosylated (N-linked (GlcNAc...) asparagine; by host). The helical transmembrane segment at 803-823 (QYLGASLGGAFLAVVGFGIIG) threads the bilayer. The Intravirion segment spans residues 824–841 (WMLCGNSRLREYNKIPLT).

This sequence belongs to the herpesviridae glycoprotein H family. Interacts with glycoprotein L (gL); this interaction is necessary for the correct processing and cell surface expression of gH. The heterodimer gH/gL seems to interact with gB trimers during fusion. In terms of processing, N-glycosylated, O-glycosylated, and sialylated.

Its subcellular location is the virion membrane. It localises to the host cell membrane. The protein localises to the host endosome membrane. In terms of biological role, the heterodimer glycoprotein H-glycoprotein L is required for the fusion of viral and plasma membranes leading to virus entry into the host cell. Following initial binding to host receptor, membrane fusion is mediated by the fusion machinery composed of gB and the heterodimer gH/gL. May also be involved in the fusion between the virion envelope and the outer nuclear membrane during virion morphogenesis. The protein is Envelope glycoprotein H of Varicella-zoster virus (strain Oka vaccine) (HHV-3).